The sequence spans 361 residues: Homeobox protein knotted-1-like 6 (361 aa).

Residues 11–48 (VGASGVHGGHQHQHHHHPWGSSLSAIVAPPPPPQLQQQ) form a disordered region. The span at 19 to 28 (GHQHQHHHHP) shows a compositional bias: basic residues. The 21-residue stretch at 242–262 (ELKHHLLKKYSGYLSSLKQEL) folds into the ELK domain. The homeobox; TALE-type DNA-binding region spans 263–326 (SKKKKKGKLP…NQRKRHWKPS (64 aa)).

Belongs to the TALE/KNOX homeobox family. As to quaternary structure, interacts with FTIP7. As to expression, expressed predominantly in shoot apices. Also found to a lesser extent in glumes.

The protein localises to the nucleus. The protein resides in the cytoplasm. In terms of biological role, transcription factor that regulates genes involved in development. May be involved in shoot formation during embryogenesis. Overexpression in transgenic plants causes altered leaf morphology. Regulates anther dehiscence via direct repression of the auxin biosynthetic gene YUCCA4. Binds to the DNA sequence 5'-TGAC-3' in the promoter of the YUCCA4 gene and represses its activity during anther development. Reduction of auxin levels at late stage of anther development, after meiosis of microspore mother cells, is necessary for normal anther dehiscence and seed setting. The polypeptide is Homeobox protein knotted-1-like 6 (OSH1) (Oryza sativa subsp. japonica (Rice)).